The chain runs to 601 residues: Protein NRT1/ PTR FAMILY 4.4 (601 aa).

The next 2 membrane-spanning stretches (helical) occupy residues 44–64 (AALFVLGFQAFEMMAIAAVGN) and 82–102 (ANLVTNFIGTVFLLSLLGGFL). T112 is modified (phosphothreonine). Helical transmembrane passes span 113–133 (MLVFGVIEISGFILLSVQAHL), 160–180 (TLYTALCLVALGSGCLKPNII), 198–218 (FFNAAYFAFSMGQLIALTLLV), 228–248 (VGFGVSAAVMAAGMISLVAGT), 337–357 (ILLSVIPIFACTIIFNTILAQ), 386–406 (AIPYIILIFFVPLYETFFVPL), 420–440 (LQRIGTGLFLATFSMVAAALV), 453–473 (VMLSIFWIAPQFLIFGLSEMF), 493–513 (FLTAMTYCSYSFGFYLSSVLV), and 544–564 (HFYWLLASLSFINFFNYLFWS).

Belongs to the major facilitator superfamily. Proton-dependent oligopeptide transporter (POT/PTR) (TC 2.A.17) family. In terms of tissue distribution, expressed in shoots, roots and stems.

The protein localises to the membrane. This Arabidopsis thaliana (Mouse-ear cress) protein is Protein NRT1/ PTR FAMILY 4.4 (NPF4.4).